A 176-amino-acid chain; its full sequence is dCTP deaminase (176 aa).

Residues Arg102–Arg107 and Asp118 each bind dCTP. Residue Glu128 is the Proton donor/acceptor of the active site. Residues Tyr160, Lys166, and Gln167 each contribute to the dCTP site.

Belongs to the dCTP deaminase family. In terms of assembly, homotrimer.

It carries out the reaction dCTP + H2O + H(+) = dUTP + NH4(+). The protein operates within pyrimidine metabolism; dUMP biosynthesis; dUMP from dCTP (dUTP route): step 1/2. Its function is as follows. Catalyzes the deamination of dCTP to dUTP. The protein is dCTP deaminase of Staphylothermus marinus (strain ATCC 43588 / DSM 3639 / JCM 9404 / F1).